Consider the following 261-residue polypeptide: 3-methyl-2-oxobutanoate hydroxymethyltransferase (261 aa).

Mg(2+) contacts are provided by Asp47 and Asp86. Residues Asp47 to Ser48, Asp86, and Lys116 contribute to the 3-methyl-2-oxobutanoate site. Glu118 is a Mg(2+) binding site. Catalysis depends on Glu186, which acts as the Proton acceptor.

Belongs to the PanB family. As to quaternary structure, homodecamer; pentamer of dimers. Requires Mg(2+) as cofactor.

It is found in the cytoplasm. The catalysed reaction is 3-methyl-2-oxobutanoate + (6R)-5,10-methylene-5,6,7,8-tetrahydrofolate + H2O = 2-dehydropantoate + (6S)-5,6,7,8-tetrahydrofolate. It functions in the pathway cofactor biosynthesis; (R)-pantothenate biosynthesis; (R)-pantoate from 3-methyl-2-oxobutanoate: step 1/2. Its function is as follows. Catalyzes the reversible reaction in which hydroxymethyl group from 5,10-methylenetetrahydrofolate is transferred onto alpha-ketoisovalerate to form ketopantoate. This chain is 3-methyl-2-oxobutanoate hydroxymethyltransferase, found in Thermosynechococcus vestitus (strain NIES-2133 / IAM M-273 / BP-1).